The primary structure comprises 141 residues: Endoribonuclease YbeY (141 aa).

Positions 107, 111, and 117 each coordinate Zn(2+).

This sequence belongs to the endoribonuclease YbeY family. The cofactor is Zn(2+).

It is found in the cytoplasm. In terms of biological role, single strand-specific metallo-endoribonuclease involved in late-stage 70S ribosome quality control and in maturation of the 3' terminus of the 16S rRNA. This chain is Endoribonuclease YbeY, found in Endomicrobium trichonymphae.